Consider the following 312-residue polypeptide: MIEFEKPNITKIDENKDYGKFVVEPLERGYGTTLGNSLRRVLLASLPGAAVTSINIEGVLHEFDTISGVREDVMQIILNVKGIAVKSYVQDEKIIELDVEGPAEVTAGDILTDSDIEIINPDHYLFTIGEGASFKATMTVNSGRGYVPADENKKDDAPVGTLAVDSIYTPVTKVNYQVEPARVGSNDGFDKLTLEILTNGTIIPEDALGLSARILTEHLNLFTNLTEVAIAADVMKEAEKTSDDRILERTIEELDLSVRSYNCLKRAGINTVFDLTEKSEPEMMKVRNLGRKSLEEVKVKLADLGLGLKNDK.

Residues 1 to 226 (MIEFEKPNIT…EHLNLFTNLT (226 aa)) form an alpha N-terminal domain (alpha-NTD) region. The segment at 243 to 312 (DDRILERTIE…DLGLGLKNDK (70 aa)) is alpha C-terminal domain (alpha-CTD).

This sequence belongs to the RNA polymerase alpha chain family. As to quaternary structure, homodimer. The RNAP catalytic core consists of 2 alpha, 1 beta, 1 beta' and 1 omega subunit. When a sigma factor is associated with the core the holoenzyme is formed, which can initiate transcription.

It catalyses the reaction RNA(n) + a ribonucleoside 5'-triphosphate = RNA(n+1) + diphosphate. Its function is as follows. DNA-dependent RNA polymerase catalyzes the transcription of DNA into RNA using the four ribonucleoside triphosphates as substrates. In Streptococcus sanguinis (strain SK36), this protein is DNA-directed RNA polymerase subunit alpha.